A 74-amino-acid polypeptide reads, in one-letter code: Translation initiation factor IF-1 (74 aa).

The region spanning methionine 1 to arginine 72 is the S1-like domain.

The protein belongs to the IF-1 family. In terms of assembly, component of the 30S ribosomal translation pre-initiation complex which assembles on the 30S ribosome in the order IF-2 and IF-3, IF-1 and N-formylmethionyl-tRNA(fMet); mRNA recruitment can occur at any time during PIC assembly.

The protein resides in the cytoplasm. Its function is as follows. One of the essential components for the initiation of protein synthesis. Stabilizes the binding of IF-2 and IF-3 on the 30S subunit to which N-formylmethionyl-tRNA(fMet) subsequently binds. Helps modulate mRNA selection, yielding the 30S pre-initiation complex (PIC). Upon addition of the 50S ribosomal subunit IF-1, IF-2 and IF-3 are released leaving the mature 70S translation initiation complex. This is Translation initiation factor IF-1 from Ureaplasma parvum serovar 3 (strain ATCC 700970).